A 407-amino-acid polypeptide reads, in one-letter code: Putative glycosyltransferase YtcC (407 aa).

This sequence belongs to the glycosyltransferase group 1 family. Glycosyltransferase 4 subfamily.

This chain is Putative glycosyltransferase YtcC (ytcC), found in Bacillus subtilis (strain 168).